The chain runs to 356 residues: Biotin synthase (356 aa).

Residues 51–270 form the Radical SAM core domain; that stretch reads NKVQCNQLLN…IALARIMMPL (220 aa). 3 residues coordinate [4Fe-4S] cluster: C66, C70, and C73. The [2Fe-2S] cluster site is built by C110, C141, C201, and R274. The segment at 310 to 356 is disordered; it reads PGDNKDRSLFDRLGLEPRDDHGVHEHSSHSHTHDQGHDHGPHGHSHG. The segment covering 312–350 has biased composition (basic and acidic residues); that stretch reads DNKDRSLFDRLGLEPRDDHGVHEHSSHSHTHDQGHDHGP.

This sequence belongs to the radical SAM superfamily. Biotin synthase family. Homodimer. It depends on [4Fe-4S] cluster as a cofactor. [2Fe-2S] cluster is required as a cofactor.

The enzyme catalyses (4R,5S)-dethiobiotin + (sulfur carrier)-SH + 2 reduced [2Fe-2S]-[ferredoxin] + 2 S-adenosyl-L-methionine = (sulfur carrier)-H + biotin + 2 5'-deoxyadenosine + 2 L-methionine + 2 oxidized [2Fe-2S]-[ferredoxin]. It functions in the pathway cofactor biosynthesis; biotin biosynthesis; biotin from 7,8-diaminononanoate: step 2/2. Its function is as follows. Catalyzes the conversion of dethiobiotin (DTB) to biotin by the insertion of a sulfur atom into dethiobiotin via a radical-based mechanism. The chain is Biotin synthase from Rhodopseudomonas palustris (strain BisB18).